The following is a 91-amino-acid chain: Putative septation protein SpoVG (91 aa).

This sequence belongs to the SpoVG family.

In terms of biological role, could be involved in septation. This chain is Putative septation protein SpoVG, found in Caldanaerobacter subterraneus subsp. tengcongensis (strain DSM 15242 / JCM 11007 / NBRC 100824 / MB4) (Thermoanaerobacter tengcongensis).